Consider the following 504-residue polypeptide: ATP synthase subunit alpha (504 aa).

Residue 169–176 (GDRQTGKT) coordinates ATP.

The protein belongs to the ATPase alpha/beta chains family. As to quaternary structure, F-type ATPases have 2 components, CF(1) - the catalytic core - and CF(0) - the membrane proton channel. CF(1) has five subunits: alpha(3), beta(3), gamma(1), delta(1), epsilon(1). CF(0) has three main subunits: a(1), b(2) and c(9-12). The alpha and beta chains form an alternating ring which encloses part of the gamma chain. CF(1) is attached to CF(0) by a central stalk formed by the gamma and epsilon chains, while a peripheral stalk is formed by the delta and b chains.

It localises to the cell membrane. The enzyme catalyses ATP + H2O + 4 H(+)(in) = ADP + phosphate + 5 H(+)(out). Produces ATP from ADP in the presence of a proton gradient across the membrane. The alpha chain is a regulatory subunit. This Clostridium botulinum (strain Eklund 17B / Type B) protein is ATP synthase subunit alpha.